The sequence spans 88 residues: Exodeoxyribonuclease 7 small subunit (88 aa).

Positions 68-88 are disordered; that stretch reads SDPMHPDDGEPFDPSLVSTSQ.

This sequence belongs to the XseB family. As to quaternary structure, heterooligomer composed of large and small subunits.

The protein resides in the cytoplasm. The catalysed reaction is Exonucleolytic cleavage in either 5'- to 3'- or 3'- to 5'-direction to yield nucleoside 5'-phosphates.. Its function is as follows. Bidirectionally degrades single-stranded DNA into large acid-insoluble oligonucleotides, which are then degraded further into small acid-soluble oligonucleotides. The sequence is that of Exodeoxyribonuclease 7 small subunit from Xylella fastidiosa (strain 9a5c).